The following is a 555-amino-acid chain: Connector enhancer of kinase suppressor of ras 3 (555 aa).

The 66-residue stretch at 7–72 (WSPKQVVDWT…LEAVDLLCAL (66 aa)) folds into the SAM domain. The 95-residue stretch at 80–174 (NMKNLVLKLR…TTVQKDCFVA (95 aa)) folds into the CRIC domain. The region spanning 211–293 (EVHLPNIKPG…GVVLLLKKRP (83 aa)) is the PDZ domain. Disordered stretches follow at residues 309–334 (WKPPLVQTSPPPATTQSPESTMDTSL), 347–390 (PPPP…FLDQ), and 517–537 (IPFQEEGTKKKSGSSATKSSS). The DUF1170 domain maps to 325 to 546 (SPESTMDTSL…STEPSLLVSW (222 aa)). Residues Ser381 and Ser383 each carry the phosphoserine modification.

It belongs to the CNKSR family. As to quaternary structure, interacts with epithelial sodium channel ENaC. Interacts directly with SCNN1A (ENaC subunit alpha) and SCNN1B (ENaC subunit beta) C-terminal tails. Interacts with ENaC regulatory proteins NEDD4L, RAF1 and SGK1.

Its subcellular location is the cytoplasm. The protein localises to the apical cell membrane. Its function is as follows. Involved in transepithelial sodium transport. Regulates aldosterone-induced and epithelial sodium channel (ENaC)-mediated sodium transport through regulation of ENaC cell surface expression. Acts as a scaffold protein coordinating the assembly of an ENaC-regulatory complex (ERC). This is Connector enhancer of kinase suppressor of ras 3 (CNKSR3) from Homo sapiens (Human).